We begin with the raw amino-acid sequence, 93 residues long: Small ribosomal subunit protein uS19 (93 aa).

Belongs to the universal ribosomal protein uS19 family.

Protein S19 forms a complex with S13 that binds strongly to the 16S ribosomal RNA. This Mycolicibacterium paratuberculosis (strain ATCC BAA-968 / K-10) (Mycobacterium paratuberculosis) protein is Small ribosomal subunit protein uS19.